Reading from the N-terminus, the 383-residue chain is Protein dyf-4 (383 aa).

The signal sequence occupies residues 1-16 (MKTIWLLLATCIHVFA). The N-linked (GlcNAc...) asparagine glycan is linked to N64.

In terms of assembly, interacts with daf-6. As to expression, expressed in sheath and socket glial cells in both the amphid and phasmid ciliated sensory neurons (at protein level).

The protein resides in the secreted. Functionally, required for the localization of daf-6 to the socket glial channel and the sheath lumen. In association with daf-6, plays a role in dendrite extension and ciliogenesis to ensure the formation of glial channels in amphid and phasmid ciliated sensory neurons. In Caenorhabditis elegans, this protein is Protein dyf-4.